A 300-amino-acid chain; its full sequence is Protoheme IX farnesyltransferase (300 aa).

Helical transmembrane passes span valine 24–valine 44, tryptophan 46–isoleucine 66, proline 94–phenylalanine 114, leucine 118–leucine 138, isoleucine 146–glycine 166, alanine 172–leucine 192, leucine 217–glycine 237, serine 239–tryptophan 259, and isoleucine 278–leucine 298.

Belongs to the UbiA prenyltransferase family. Protoheme IX farnesyltransferase subfamily.

Its subcellular location is the cell inner membrane. It catalyses the reaction heme b + (2E,6E)-farnesyl diphosphate + H2O = Fe(II)-heme o + diphosphate. It functions in the pathway porphyrin-containing compound metabolism; heme O biosynthesis; heme O from protoheme: step 1/1. Functionally, converts heme B (protoheme IX) to heme O by substitution of the vinyl group on carbon 2 of heme B porphyrin ring with a hydroxyethyl farnesyl side group. This chain is Protoheme IX farnesyltransferase, found in Burkholderia lata (strain ATCC 17760 / DSM 23089 / LMG 22485 / NCIMB 9086 / R18194 / 383).